The sequence spans 140 residues: Transcription antitermination protein NusB (140 aa).

The protein belongs to the NusB family.

Its function is as follows. Involved in transcription antitermination. Required for transcription of ribosomal RNA (rRNA) genes. Binds specifically to the boxA antiterminator sequence of the ribosomal RNA (rrn) operons. This Leptospira biflexa serovar Patoc (strain Patoc 1 / Ames) protein is Transcription antitermination protein NusB.